Here is an 892-residue protein sequence, read N- to C-terminus: Alanine--tRNA ligase (892 aa).

4 residues coordinate Zn(2+): histidine 594, histidine 598, cysteine 702, and histidine 706.

It belongs to the class-II aminoacyl-tRNA synthetase family. Requires Zn(2+) as cofactor.

The protein resides in the cytoplasm. It catalyses the reaction tRNA(Ala) + L-alanine + ATP = L-alanyl-tRNA(Ala) + AMP + diphosphate. Catalyzes the attachment of alanine to tRNA(Ala) in a two-step reaction: alanine is first activated by ATP to form Ala-AMP and then transferred to the acceptor end of tRNA(Ala). Also edits incorrectly charged Ser-tRNA(Ala) and Gly-tRNA(Ala) via its editing domain. The chain is Alanine--tRNA ligase from Pyrobaculum arsenaticum (strain DSM 13514 / JCM 11321 / PZ6).